Reading from the N-terminus, the 265-residue chain is Silaffin-1 (265 aa).

The N-terminal stretch at 1–19 (MKLTAIFPLLFTAVGYCAA) is a signal peptide. Residues 20–107 (QSIADLAAAN…DSEEEELRIL (88 aa)) constitute a propeptide, acidic. The segment at 37–106 (SAQLISADSS…EDSEEEELRI (70 aa)) is disordered. Over residues 51 to 90 (DSSVESVDAASSDVSGSSVESVDVSGSSLESVDVSGSSLE) the composition is skewed to low complexity. Acidic residues predominate over residues 91–103 (SVDDSSEDSEEEE). Residues 108–140 (SSKKSGSYYSYGTKKSGSYSGYSTKKSASRRIL) form an R1; atypical repeat. Residues 108 to 257 (SSKKSGSYYS…GSKGSKRRIL (150 aa)) form a 7 X 19 AA repeat of S-S-K-K-S-G-S-Y-S-G-S-K-G-S-K-R-R-[IL]-L region. Position 110 is an N6-poly(methylaminopropyl)lysine (K110). K111 bears the N6,N6-dimethyllysine mark. Positions 122–133 (KSGSYSGYSTKK) are enriched in low complexity. A disordered region spans residues 122–265 (KSGSYSGYST…ILSGGLRGSM (144 aa)). The propeptide occupies 137–140 (RRIL). The R2; atypical repeat unit spans residues 141 to 162 (SSKKSGSYSGYSTKKSGSRRIL). Low complexity predominate over residues 142–155 (SKKSGSYSGYSTKK). K143 carries the N6-poly(methylaminopropyl)lysine modification. K144 carries the post-translational modification N6,N6-dimethyllysine. Position 154 is an N6-poly(methylaminopropyl)lysine (K154). At K155 the chain carries N6,N6-dimethyllysine. Positions 159-162 (RRIL) are excised as a propeptide. Residues S163 and S164 each carry the phosphoserine modification. The R3 repeat unit spans residues 163–181 (SSKKSGSYSGSKGSKRRIL). The span at 164–174 (SKKSGSYSGSK) shows a compositional bias: low complexity. K165 carries the N6-poly(methylaminopropyl)lysine modification. K166 carries the N6,N6-dimethyllysine modification. A phosphoserine mark is found at S167, S169, S171, and S173. K174 carries the post-translational modification N6,N6,N6-trimethyl-5-hydroxylysine. Phosphoserine is present on S176. Position 177 is an N6-poly(methylaminopropyl)lysine (K177). Positions 178–181 (RRIL) are excised as a propeptide. Phosphoserine is present on residues S182 and S183. The R4 repeat unit spans residues 182 to 200 (SSKKSGSYSGSKGSKRRNL). The segment covering 183–193 (SKKSGSYSGSK) has biased composition (low complexity). Position 184 is an N6-poly(methylaminopropyl)lysine (K184). Residue K185 is modified to N6,N6-dimethyllysine. Residues S186, S188, S190, and S192 each carry the phosphoserine modification. At K193 the chain carries N6,N6,N6-trimethyl-5-hydroxylysine. A Phosphoserine modification is found at S195. K196 carries the N6-poly(methylaminopropyl)lysine modification. The propeptide occupies 197–200 (RRNL). S201 and S202 each carry phosphoserine. One copy of the R5 repeat lies at 201–219 (SSKKSGSYSGSKGSKRRIL). A compositionally biased stretch (low complexity) spans 202–212 (SKKSGSYSGSK). Position 203 is an N6-poly(methylaminopropyl)lysine (K203). K204 is modified (N6,N6-dimethyllysine). A phosphoserine mark is found at S205, S207, S209, and S211. K212 carries the N6,N6,N6-trimethyl-5-hydroxylysine modification. S214 bears the Phosphoserine mark. The residue at position 215 (K215) is an N6-poly(methylaminopropyl)lysine. A propeptide spanning residues 216–219 (RRIL) is cleaved from the precursor. S220 and S221 each carry phosphoserine. An R6 repeat occupies 220–238 (SSKKSGSYSGSKGSKRRNL). Residues 221–231 (SKKSGSYSGSK) show a composition bias toward low complexity. At K222 the chain carries N6-poly(methylaminopropyl)lysine. K223 carries the N6,N6-dimethyllysine modification. Phosphoserine occurs at positions 224, 226, 228, and 230. Residue K231 is modified to N6,N6,N6-trimethyl-5-hydroxylysine. S233 carries the post-translational modification Phosphoserine. Position 234 is an N6-poly(methylaminopropyl)lysine (K234). Residues 235–238 (RRNL) constitute a propeptide that is removed on maturation. Phosphoserine occurs at positions 239 and 240. One copy of the R7 repeat lies at 239 to 257 (SSKKSGSYSGSKGSKRRIL). A compositionally biased stretch (low complexity) spans 240–250 (SKKSGSYSGSK). K241 is modified (N6-poly(methylaminopropyl)lysine). At K242 the chain carries N6,N6-dimethyllysine. A phosphoserine mark is found at S243, S245, S247, and S249. Residue K250 is modified to N6,N6,N6-trimethyl-5-hydroxylysine. A Phosphoserine modification is found at S252. An N6-poly(methylaminopropyl)lysine modification is found at K253. The propeptide occupies 254-265 (RRILSGGLRGSM).

In terms of assembly, silaffin-1A peptides form large aggregates via electrostatic interactions due to intermolecular interactions between the negatively charged phosphate groups and the polyamine moieties. N6-polymethylaminopropylated. Two lysine residues of each peptide bears 6 to 11 repeats of methyl-propylamine, which gives a possible template for nucleation, and may also control the silica colloid size within the silica deposition vesicle (SDV). Post-translationally, phosphorylated. All serine residues of the Silaffin-1A1 peptide are phosphorylated. Only minor amounts of the Silaffin-1A2 peptide are phosphorylated. Phosphorylation is essential for the activity. It may represent a source of anions required for silica formation of diatoms.

Functionally, catalyzes the polymerization of silica spheres from a silicilic acid solution. It therefore plays a central role in the formation of silica cell wall of diatoms. This Cylindrotheca fusiformis (Marine diatom) protein is Silaffin-1 (SIL1).